A 940-amino-acid polypeptide reads, in one-letter code: UvrABC system protein A (940 aa).

Glycine 32–serine 39 contacts ATP. The C4-type zinc-finger motif lies at cysteine 252–cysteine 279. ABC transporter domains are found at residues tryptophan 309 to leucine 589 and serine 609 to lysine 937. Glycine 641 to serine 648 is a binding site for ATP. A C4-type zinc finger spans residues cysteine 740 to cysteine 766.

The protein belongs to the ABC transporter superfamily. UvrA family. Forms a heterotetramer with UvrB during the search for lesions.

The protein localises to the cytoplasm. The UvrABC repair system catalyzes the recognition and processing of DNA lesions. UvrA is an ATPase and a DNA-binding protein. A damage recognition complex composed of 2 UvrA and 2 UvrB subunits scans DNA for abnormalities. When the presence of a lesion has been verified by UvrB, the UvrA molecules dissociate. The chain is UvrABC system protein A from Clostridium tetani (strain Massachusetts / E88).